Reading from the N-terminus, the 233-residue chain is Adenosine 5'-phosphosulfate reductase (233 aa).

[4Fe-4S] cluster-binding residues include Cys-120, Cys-121, Cys-203, and Cys-206. Residue Cys-229 is the Nucleophile; cysteine thiosulfonate intermediate of the active site.

Belongs to the PAPS reductase family. CysH subfamily. [4Fe-4S] cluster is required as a cofactor.

The protein resides in the cytoplasm. It catalyses the reaction [thioredoxin]-disulfide + sulfite + AMP + 2 H(+) = adenosine 5'-phosphosulfate + [thioredoxin]-dithiol. The protein operates within sulfur metabolism; hydrogen sulfide biosynthesis; sulfite from sulfate. Functionally, catalyzes the formation of sulfite from adenosine 5'-phosphosulfate (APS) using thioredoxin as an electron donor. The sequence is that of Adenosine 5'-phosphosulfate reductase from Bacillus pumilus (strain SAFR-032).